Reading from the N-terminus, the 266-residue chain is 15-hydroxyprostaglandin dehydrogenase [NAD(+)] (266 aa).

Residues 12–20, 36–37, 63–65, and Asn-91 contribute to the NAD(+) site; these read GAAQGIGRA, DW, and CDV. Substrate is bound by residues Ser-138 and Gln-148. The Proton acceptor role is filled by Tyr-151. NAD(+) contacts are provided by residues 151-155 and 186-188; these read YCASK and VDT.

It belongs to the short-chain dehydrogenases/reductases (SDR) family. Homodimer.

Its subcellular location is the cytoplasm. It catalyses the reaction prostaglandin E2 + NAD(+) = 15-oxoprostaglandin E2 + NADH + H(+). The enzyme catalyses (15S)-hydroxy-(5Z,8Z,11Z,13E)-eicosatetraenoate + NAD(+) = 15-oxo-(5Z,8Z,11Z,13E)-eicosatetraenoate + NADH + H(+). It carries out the reaction (11R)-hydroxy-(5Z,8Z,12E,14Z)-eicosatetraenoate + NAD(+) = 11-oxo-(5Z,8Z,12E,14Z)-eicosatetraenoate + NADH + H(+). The catalysed reaction is lipoxin A4 + NAD(+) = 15-oxo-(5S,6R)-dihydroxy-(7E,9E,11Z,13E)-eicosatetraenoate + NADH + H(+). It catalyses the reaction 15-oxo-(5S,6R)-dihydroxy-(7E,9E,11Z)-eicosatrienoate + NADH + H(+) = (5S,6R,15S)-trihydroxy-(7E,9E,11Z)-eicosatrienoate + NAD(+). The enzyme catalyses prostaglandin A1 + NAD(+) = 15-oxo-prostaglandin A1 + NADH + H(+). It carries out the reaction prostaglandin E1 + NAD(+) = 15-oxoprostaglandin E1 + NADH + H(+). The catalysed reaction is 14-hydroxy-(4Z,7Z,10Z,12E,16Z,19Z)-docosahexaenoate + NAD(+) = 14-oxo-(4Z,7Z,10Z,12E,16Z,19Z)-docosahexaenoate + NADH + H(+). It catalyses the reaction resolvin E1 + NAD(+) = 18-oxo-resolvin E1 + NADH + H(+). The enzyme catalyses resolvin D1 + NAD(+) = 8-oxoresolvin D1 + NADH + H(+). It carries out the reaction resolvin D1 + NAD(+) = 17-oxoresolvin D1 + NADH + H(+). The catalysed reaction is resolvin D2 + NAD(+) = 7-oxoresolvin D2 + NADH + H(+). It catalyses the reaction resolvin D2 + NAD(+) = 16-oxoresolvin D2 + NADH + H(+). Catalyzes the NAD-dependent dehydrogenation (oxidation) of a broad array of hydroxylated polyunsaturated fatty acids (mainly eicosanoids and docosanoids, including prostaglandins, lipoxins and resolvins), yielding their corresponding keto (oxo) metabolites. Decreases the levels of the pro-proliferative prostaglandins such as prostaglandin E2 (whose activity is increased in cancer because of an increase in the expression of cyclooxygenase 2) and generates oxo-fatty acid products that can profoundly influence cell function by abrogating pro-inflammatory cytokine expression. Converts resolvins E1, D1 and D2 to their oxo products, which represents a mode of resolvin inactivation. Resolvin E1 plays important roles during the resolution phase of acute inflammation, while resolvins D1 and D2 have a unique role in obesity-induced adipose inflammation. This chain is 15-hydroxyprostaglandin dehydrogenase [NAD(+)] (HPGD), found in Bos taurus (Bovine).